Here is a 467-residue protein sequence, read N- to C-terminus: Serine decarboxylase 2 (467 aa).

Residue His178 coordinates substrate. Position 290 is an N6-(pyridoxal phosphate)lysine (Lys290).

It belongs to the group II decarboxylase family. Pyridoxal 5'-phosphate serves as cofactor.

The enzyme catalyses L-serine + H(+) = ethanolamine + CO2. Functionally, catalyzes the biosynthesis of ethanolamine from serine. Decarboxylation of free serine is the major source of ethanolamine production in plants and ethanolamine metabolism is crucial for the synthesis of choline, phosphatidylethanolamine (PE) and phosphatidylcholine (PC), and thus for plant growth. The chain is Serine decarboxylase 2 from Oryza sativa subsp. japonica (Rice).